Consider the following 88-residue polypeptide: Putative sulfur carrier protein AF_0554 (88 aa).

Cysteine 26 serves as the catalytic Cysteine persulfide intermediate.

It belongs to the sulfur carrier protein TusA family.

The polypeptide is Putative sulfur carrier protein AF_0554 (Archaeoglobus fulgidus (strain ATCC 49558 / DSM 4304 / JCM 9628 / NBRC 100126 / VC-16)).